We begin with the raw amino-acid sequence, 65 residues long: Large ribosomal subunit protein bL35 (65 aa).

Residues 1 to 26 (MPKMKSNKGASKRFKKTASGGFKCKQ) form a disordered region.

Belongs to the bacterial ribosomal protein bL35 family.

The sequence is that of Large ribosomal subunit protein bL35 from Idiomarina loihiensis (strain ATCC BAA-735 / DSM 15497 / L2-TR).